A 367-amino-acid chain; its full sequence is Quinolinate synthase (367 aa).

His45 and Ser62 together coordinate iminosuccinate. A [4Fe-4S] cluster-binding site is contributed by Cys109. Residues 140–142 (YVN) and Ser161 contribute to the iminosuccinate site. Cys229 serves as a coordination point for [4Fe-4S] cluster. Iminosuccinate-binding positions include 255–257 (HPE) and Thr272. Cys319 contributes to the [4Fe-4S] cluster binding site.

Belongs to the quinolinate synthase family. Type 3 subfamily. It depends on [4Fe-4S] cluster as a cofactor.

It is found in the cytoplasm. The enzyme catalyses iminosuccinate + dihydroxyacetone phosphate = quinolinate + phosphate + 2 H2O + H(+). It functions in the pathway cofactor biosynthesis; NAD(+) biosynthesis; quinolinate from iminoaspartate: step 1/1. Its function is as follows. Catalyzes the condensation of iminoaspartate with dihydroxyacetone phosphate to form quinolinate. The chain is Quinolinate synthase from Geobacillus kaustophilus (strain HTA426).